The chain runs to 343 residues: Ferredoxin--NADP reductase (343 aa).

FAD-binding residues include cysteine 18, aspartate 37, glutamine 45, tyrosine 50, valine 90, phenylalanine 125, aspartate 290, and threonine 331.

It belongs to the ferredoxin--NADP reductase type 2 family. As to quaternary structure, homodimer. The cofactor is FAD.

The enzyme catalyses 2 reduced [2Fe-2S]-[ferredoxin] + NADP(+) + H(+) = 2 oxidized [2Fe-2S]-[ferredoxin] + NADPH. This Parvibaculum lavamentivorans (strain DS-1 / DSM 13023 / NCIMB 13966) protein is Ferredoxin--NADP reductase.